Consider the following 329-residue polypeptide: GTP 3',8-cyclase (329 aa).

Residues 8 to 234 form the Radical SAM core domain; the sequence is AFARKFYYLR…QLRQRSDGPA (227 aa). Residue arginine 17 coordinates GTP. [4Fe-4S] cluster contacts are provided by cysteine 24 and cysteine 28. Tyrosine 30 contacts S-adenosyl-L-methionine. Residue cysteine 31 participates in [4Fe-4S] cluster binding. Arginine 68 contacts GTP. Glycine 72 lines the S-adenosyl-L-methionine pocket. Residue threonine 99 coordinates GTP. Residue serine 123 coordinates S-adenosyl-L-methionine. GTP is bound at residue lysine 160. An S-adenosyl-L-methionine-binding site is contributed by methionine 194. The [4Fe-4S] cluster site is built by cysteine 257 and cysteine 260. 262 to 264 is a binding site for GTP; sequence RLR. Cysteine 274 contributes to the [4Fe-4S] cluster binding site.

It belongs to the radical SAM superfamily. MoaA family. Monomer and homodimer. [4Fe-4S] cluster serves as cofactor.

The catalysed reaction is GTP + AH2 + S-adenosyl-L-methionine = (8S)-3',8-cyclo-7,8-dihydroguanosine 5'-triphosphate + 5'-deoxyadenosine + L-methionine + A + H(+). Its pathway is cofactor biosynthesis; molybdopterin biosynthesis. In terms of biological role, catalyzes the cyclization of GTP to (8S)-3',8-cyclo-7,8-dihydroguanosine 5'-triphosphate. In Shigella boydii serotype 18 (strain CDC 3083-94 / BS512), this protein is GTP 3',8-cyclase.